The chain runs to 363 residues: Spermidine/putrescine import ATP-binding protein PotA (363 aa).

Residues 4 to 234 (LEIRNVTRRF…PRNHFVADFI (231 aa)) form the ABC transporter domain. Position 36–43 (36–43 (GPSGCGKT)) interacts with ATP.

The protein belongs to the ABC transporter superfamily. Spermidine/putrescine importer (TC 3.A.1.11.1) family. As to quaternary structure, the complex is composed of two ATP-binding proteins (PotA), two transmembrane proteins (PotB and PotC) and a solute-binding protein (PotD).

The protein localises to the cell inner membrane. The catalysed reaction is ATP + H2O + polyamine-[polyamine-binding protein]Side 1 = ADP + phosphate + polyamineSide 2 + [polyamine-binding protein]Side 1.. Part of the ABC transporter complex PotABCD involved in spermidine/putrescine import. Responsible for energy coupling to the transport system. This is Spermidine/putrescine import ATP-binding protein PotA from Nitrosospira multiformis (strain ATCC 25196 / NCIMB 11849 / C 71).